We begin with the raw amino-acid sequence, 484 residues long: Serine hydroxymethyltransferase, cytosolic (484 aa).

Alanine 2 is modified (N-acetylalanine). Asparagine 6 carries the deamidated asparagine; alternate modification. Residues 6–7 constitute a cross-link (isoaspartyl glycine isopeptide (Asn-Gly); alternate); sequence NG. Cysteine 204 functions as the Nucleophile in the catalytic mechanism. The Proton donor role is filled by histidine 256. Lysine 257 carries the N6-(pyridoxal phosphate)lysine modification.

It belongs to the SHMT family. Homotetramer. Identified in complex with ABRAXAS2 and the other subunits of the BRISC complex, at least composed of ABRAXAS2, BRCC3/BRCC36, BABAM2 and BABAM1/NBA1. It depends on pyridoxal 5'-phosphate as a cofactor. In terms of processing, deamidation of asparagine produces alternatively aspartate or isoaspartate, which in turn can be converted to aspartate through carboxylmethylation/demethylation.

It localises to the cytoplasm. It catalyses the reaction (6R)-5,10-methylene-5,6,7,8-tetrahydrofolate + glycine + H2O = (6S)-5,6,7,8-tetrahydrofolate + L-serine. It participates in one-carbon metabolism; tetrahydrofolate interconversion. Its function is as follows. Interconversion of serine and glycine. The sequence is that of Serine hydroxymethyltransferase, cytosolic (SHMT1) from Oryctolagus cuniculus (Rabbit).